Consider the following 986-residue polypeptide: Translation initiation factor IF-2 (986 aa).

The disordered stretch occupies residues 95-394 (TFVRRDETSA…GRGKHQDQNT (300 aa)). Basic and acidic residues predominate over residues 122–182 (ELQRREEEAR…EEEAAKKRAA (61 aa)). Positions 183-222 (AEAAAREQAQAAKPAQAAQPAAAKAEPVAAKAAEPAVAKQ) are enriched in low complexity. Positions 228–277 (ERAAAERAAQREAAKKAEDAARQAAEKARAEQEQIAKRRAAAEAEARAIR) are enriched in basic and acidic residues. Residues 320-342 (APSRPAAKKPAAAAPAATTTPSA) show a composition bias toward low complexity. Gly residues predominate over residues 371-384 (TSGGVDRGWRGGPK). Residues 486–655 (PRPPVVTVMG…LLQAEVLELK (170 aa)) form the tr-type G domain. The tract at residues 495–502 (GHVDHGKT) is G1. A GTP-binding site is contributed by 495–502 (GHVDHGKT). The segment at 520-524 (GITQH) is G2. Positions 541 to 544 (DTPG) are G3. GTP-binding positions include 541-545 (DTPGH) and 595-598 (NKID). The interval 595–598 (NKID) is G4. The tract at residues 631–633 (SAK) is G5.

The protein belongs to the TRAFAC class translation factor GTPase superfamily. Classic translation factor GTPase family. IF-2 subfamily.

The protein localises to the cytoplasm. Functionally, one of the essential components for the initiation of protein synthesis. Protects formylmethionyl-tRNA from spontaneous hydrolysis and promotes its binding to the 30S ribosomal subunits. Also involved in the hydrolysis of GTP during the formation of the 70S ribosomal complex. The protein is Translation initiation factor IF-2 of Paraburkholderia phytofirmans (strain DSM 17436 / LMG 22146 / PsJN) (Burkholderia phytofirmans).